Reading from the N-terminus, the 939-residue chain is Probable importin ECU10_0620 (939 aa).

The 68-residue stretch at 23 to 90 (AEAMLMDLEK…VENILDLFLY (68 aa)) folds into the Importin N-terminal domain.

The protein belongs to the importin beta family.

The protein resides in the nucleus. It is found in the cytoplasm. Functionally, active in protein import into the nucleus. The sequence is that of Probable importin ECU10_0620 from Encephalitozoon cuniculi (strain GB-M1) (Microsporidian parasite).